A 488-amino-acid polypeptide reads, in one-letter code: Putative BPI/LBP family protein At1g04970 (488 aa).

The first 24 residues, 1 to 24 (MDVGRCFLFLLLPSFFFLPSQTQS), serve as a signal peptide directing secretion. Asparagine 79, asparagine 109, asparagine 231, asparagine 242, and asparagine 341 each carry an N-linked (GlcNAc...) asparagine glycan.

Belongs to the BPI/LBP/Plunc superfamily. BPI/LBP (TC 1.C.40) family.

The protein is Putative BPI/LBP family protein At1g04970 of Arabidopsis thaliana (Mouse-ear cress).